We begin with the raw amino-acid sequence, 212 residues long: Tetraspanin-31-B (212 aa).

Residues 1-12 lie on the Cytoplasmic side of the membrane; sequence MVCGGFTCSKNA. A helical transmembrane segment spans residues 13-33; sequence LCALNVVYMLVGVLLIIVAAW. The Extracellular portion of the chain corresponds to 34-44; that stretch reads GKGFGIVSSIH. Residues 45 to 65 form a helical membrane-spanning segment; sequence IIGGVIAIGVFLLLIAIIGLI. Over 66–72 the chain is Cytoplasmic; that stretch reads GAVSHHQ. Residues 73–93 traverse the membrane as a helical segment; it reads VMLFIYMVVLILVFIFQFIVS. The Extracellular portion of the chain corresponds to 94–175; the sequence is CSCLAMNRSQ…MLNHADEALK (82 aa). N-linked (GlcNAc...) asparagine glycosylation is found at Asn-100, Asn-109, Asn-117, and Asn-134. Residues 176-196 traverse the membrane as a helical segment; it reads ILGGVGLFFSFTEILGVWLAF. Over 197–212 the chain is Cytoplasmic; sequence RYRNQKDPRANPSAFL.

This sequence belongs to the tetraspanin (TM4SF) family.

It localises to the membrane. This Xenopus laevis (African clawed frog) protein is Tetraspanin-31-B (tspan31-b).